The primary structure comprises 962 residues: Vacuolar membrane protease (962 aa).

Residues 1–15 (MVSSRRGFNPIAFTP) are Cytoplasmic-facing. Residues 16–36 (WPVTILSSLVYLALIIPIIVV) form a helical membrane-spanning segment. Over 37-390 (HHLVPPAPKE…FQLNTLFGHS (354 aa)) the chain is Vacuolar. N-linked (GlcNAc...) asparagine glycosylation is found at Asn110 and Asn113. The Zn(2+) site is built by His169 and Asp181. The active-site Proton acceptor is Glu215. 3 residues coordinate Zn(2+): Glu216, Glu241, and His314. The helical transmembrane segment at 391–411 (VALLVVAPLLLIITSVALFAV) threads the bilayer. The Cytoplasmic segment spans residues 412 to 440 (DKMYMFSMYTYISESGGQVSLYGLRGMFR). The helical transmembrane segment at 441–461 (FPLILGISTALTIALAFLIMK) threads the bilayer. Over 462–472 (VNPFIIYSSPY) the chain is Vacuolar. A helical transmembrane segment spans residues 473–493 (AVWSMMLSTCMFFAWFISCVA). At 494 to 503 (DFARPSALHR) the chain is on the cytoplasmic side. A helical transmembrane segment spans residues 504–524 (AYSFSWMFGIMWVFLVIATVY). Topologically, residues 525–534 (QKQHGIASSY) are vacuolar. A helical transmembrane segment spans residues 535–555 (FIVFYFAGVAVATWISYLELF). At 556–667 (GLPKTQDYAR…WSIYLMSSAW (112 aa)) the chain is on the cytoplasmic side. Residues 568–617 (GRLSDRTPSSDSHFLAPSADELPSSSSAAGRDFNPEDVEDEEPTESTSLL) form a disordered region. Over residues 602–611 (PEDVEDEEPT) the composition is skewed to acidic residues. The chain crosses the membrane as a helical span at residues 668-688 (ILQFLLVAPIVIILLGQLGLF). Topologically, residues 689-704 (LTSATYQIGADGGSQL) are vacuolar. Residues 705–725 (VIYIGIAVLSVLILLPLFPFI) traverse the membrane as a helical segment. Over 726 to 731 (HRFTYH) the chain is Cytoplasmic. A helical membrane pass occupies residues 732 to 752 (IPTFLLFILIGTLVYNLTAFP). Residues 753 to 962 (FSHSNRLKLA…LVEGSYSFKL (210 aa)) lie on the Vacuolar side of the membrane. N-linked (GlcNAc...) asparagine glycosylation occurs at Asn834.

The protein belongs to the peptidase M28 family. Requires Zn(2+) as cofactor.

Its subcellular location is the vacuole membrane. May be involved in vacuolar sorting and osmoregulation. The polypeptide is Vacuolar membrane protease (Arthroderma benhamiae (strain ATCC MYA-4681 / CBS 112371) (Trichophyton mentagrophytes)).